The primary structure comprises 705 residues: Elongation factor G 2 (705 aa).

A tr-type G domain is found at 8–288; the sequence is ERYRNIGISA…AVIDYLPSPA (281 aa). GTP-binding positions include 17 to 24, 86 to 90, and 140 to 143; these read AHIDAGKT, DTPGH, and NKMD.

Belongs to the TRAFAC class translation factor GTPase superfamily. Classic translation factor GTPase family. EF-G/EF-2 subfamily.

Its subcellular location is the cytoplasm. Functionally, catalyzes the GTP-dependent ribosomal translocation step during translation elongation. During this step, the ribosome changes from the pre-translocational (PRE) to the post-translocational (POST) state as the newly formed A-site-bound peptidyl-tRNA and P-site-bound deacylated tRNA move to the P and E sites, respectively. Catalyzes the coordinated movement of the two tRNA molecules, the mRNA and conformational changes in the ribosome. This Bordetella parapertussis (strain 12822 / ATCC BAA-587 / NCTC 13253) protein is Elongation factor G 2.